Here is a 227-residue protein sequence, read N- to C-terminus: Thymidine kinase 1 (227 aa).

ATP-binding positions include 15–22 (GPMFSGKT), 47–49 (DTR), and 91–94 (DEGQ). Glutamate 92 acts as the Proton acceptor in catalysis. A substrate-binding site is contributed by phenylalanine 122. 2 residues coordinate Zn(2+): cysteine 147 and cysteine 150. Substrate contacts are provided by residues 166–170 (IELIG) and tyrosine 175. The Zn(2+) site is built by cysteine 179 and cysteine 182. The segment covering 187–196 (QNEGNSTKPS) has biased composition (polar residues). Residues 187–227 (QNEGNSTKPSKTARHSHSQSAPSVAPLAVNINPDDHLNNDY) form a disordered region.

It belongs to the thymidine kinase family. Interacts with calmodulin in the presence of Ca(2+).

The enzyme catalyses thymidine + ATP = dTMP + ADP + H(+). The polypeptide is Thymidine kinase 1 (Dictyostelium discoideum (Social amoeba)).